We begin with the raw amino-acid sequence, 907 residues long: Putative ATP-dependent DNA helicase DDX11-like protein 8 (907 aa).

The 439-residue stretch at 9-447 folds into the Helicase ATP-binding domain; that stretch reads GAIHFPFPFT…KNLMYLKQIL (439 aa). 44–51 contributes to the ATP binding site; sequence SPTGTGKS. The interval 202–222 is disordered; it reads YESDEEKKVASGHRVDEDEDD. Over residues 206–217 the composition is skewed to basic and acidic residues; the sequence is EEKKVASGHRVD. The residue at position 264 (S264) is a Phosphoserine. 2 residues coordinate [4Fe-4S] cluster: C269 and C287. Residues 291 to 306 are compositionally biased toward basic and acidic residues; it reads QRSRHEKKKGAEEEKP. A disordered region spans residues 291–314; that stretch reads QRSRHEKKKGAEEEKPKRRRQEKQ. [4Fe-4S] cluster is bound by residues C317 and C352. The DEAH signature appears at 395-398; that stretch reads DEAH.

Belongs to the DEAD box helicase family. DEAH subfamily. DDX11/CHL1 sub-subfamily. [4Fe-4S] cluster serves as cofactor.

It is found in the nucleus. Its subcellular location is the nucleolus. Putative DNA helicase. The sequence is that of Putative ATP-dependent DNA helicase DDX11-like protein 8 (DDX11L8) from Homo sapiens (Human).